The following is a 304-amino-acid chain: Ribonuclease Z (304 aa).

Residues His-63, His-65, Asp-67, His-68, His-143, Asp-213, and His-271 each coordinate Zn(2+). The Proton acceptor role is filled by Asp-67.

Belongs to the RNase Z family. As to quaternary structure, homodimer. It depends on Zn(2+) as a cofactor.

The enzyme catalyses Endonucleolytic cleavage of RNA, removing extra 3' nucleotides from tRNA precursor, generating 3' termini of tRNAs. A 3'-hydroxy group is left at the tRNA terminus and a 5'-phosphoryl group is left at the trailer molecule.. Zinc phosphodiesterase, which displays some tRNA 3'-processing endonuclease activity. Probably involved in tRNA maturation, by removing a 3'-trailer from precursor tRNA. The sequence is that of Ribonuclease Z from Bacteroides fragilis (strain YCH46).